Reading from the N-terminus, the 345-residue chain is Uroporphyrinogen decarboxylase (345 aa).

Substrate is bound by residues 27 to 31 (RQAGR), D77, Y152, S207, and H323.

This sequence belongs to the uroporphyrinogen decarboxylase family. In terms of assembly, homodimer.

It is found in the cytoplasm. It catalyses the reaction uroporphyrinogen III + 4 H(+) = coproporphyrinogen III + 4 CO2. It functions in the pathway porphyrin-containing compound metabolism; protoporphyrin-IX biosynthesis; coproporphyrinogen-III from 5-aminolevulinate: step 4/4. Functionally, catalyzes the decarboxylation of four acetate groups of uroporphyrinogen-III to yield coproporphyrinogen-III. The protein is Uroporphyrinogen decarboxylase of Maricaulis maris (strain MCS10) (Caulobacter maris).